Here is a 540-residue protein sequence, read N- to C-terminus: Zinc metalloproteinase nas-10 (540 aa).

One can recognise a Peptidase M12A domain in the interval 293-500 (ASIFFEQNLI…VEILNKMYCK (208 aa)). 5 disulfides stabilise this stretch: cysteine 339–cysteine 499, cysteine 365–cysteine 385, cysteine 504–cysteine 540, cysteine 511–cysteine 533, and cysteine 520–cysteine 537. Histidine 394 serves as a coordination point for Zn(2+). Glutamate 395 is an active-site residue. The Zn(2+) site is built by histidine 398 and histidine 404. In terms of domain architecture, ShKT spans 504–540 (CDDKNVYCGAWALQDLCNNPNHNVWMRSNCRKSCNFC).

Requires Zn(2+) as cofactor.

In terms of biological role, metalloprotease. The chain is Zinc metalloproteinase nas-10 from Caenorhabditis elegans.